Here is a 412-residue protein sequence, read N- to C-terminus: Probable inactive allantoicase (412 aa).

Belongs to the allantoicase family.

Its function is as follows. The function of this enzyme is unclear as allantoicase activity is not known to exist in mammals. This chain is Probable inactive allantoicase (ALLC), found in Bos taurus (Bovine).